The sequence spans 37 residues: MKVRPSVKKMCDNCKIIKRRGVIRVICATPKHKQRQG.

This sequence belongs to the bacterial ribosomal protein bL36 family.

The polypeptide is Large ribosomal subunit protein bL36 (Helicobacter pylori (strain ATCC 700392 / 26695) (Campylobacter pylori)).